The chain runs to 333 residues: 4-hydroxy-3-methylbut-2-enyl diphosphate reductase (333 aa).

A [4Fe-4S] cluster-binding site is contributed by Cys20. The (2E)-4-hydroxy-3-methylbut-2-enyl diphosphate site is built by His49 and His85. Residues His49 and His85 each coordinate dimethylallyl diphosphate. Isopentenyl diphosphate contacts are provided by His49 and His85. Cys107 serves as a coordination point for [4Fe-4S] cluster. Residue His135 coordinates (2E)-4-hydroxy-3-methylbut-2-enyl diphosphate. His135 contributes to the dimethylallyl diphosphate binding site. An isopentenyl diphosphate-binding site is contributed by His135. Glu137 functions as the Proton donor in the catalytic mechanism. Thr176 lines the (2E)-4-hydroxy-3-methylbut-2-enyl diphosphate pocket. Cys206 provides a ligand contact to [4Fe-4S] cluster. 4 residues coordinate (2E)-4-hydroxy-3-methylbut-2-enyl diphosphate: Ser234, Ser235, Asn236, and Ser279. Positions 234, 235, 236, and 279 each coordinate dimethylallyl diphosphate. The isopentenyl diphosphate site is built by Ser234, Ser235, Asn236, and Ser279.

It belongs to the IspH family. [4Fe-4S] cluster serves as cofactor.

It catalyses the reaction isopentenyl diphosphate + 2 oxidized [2Fe-2S]-[ferredoxin] + H2O = (2E)-4-hydroxy-3-methylbut-2-enyl diphosphate + 2 reduced [2Fe-2S]-[ferredoxin] + 2 H(+). The catalysed reaction is dimethylallyl diphosphate + 2 oxidized [2Fe-2S]-[ferredoxin] + H2O = (2E)-4-hydroxy-3-methylbut-2-enyl diphosphate + 2 reduced [2Fe-2S]-[ferredoxin] + 2 H(+). The protein operates within isoprenoid biosynthesis; dimethylallyl diphosphate biosynthesis; dimethylallyl diphosphate from (2E)-4-hydroxy-3-methylbutenyl diphosphate: step 1/1. It participates in isoprenoid biosynthesis; isopentenyl diphosphate biosynthesis via DXP pathway; isopentenyl diphosphate from 1-deoxy-D-xylulose 5-phosphate: step 6/6. Its function is as follows. Catalyzes the conversion of 1-hydroxy-2-methyl-2-(E)-butenyl 4-diphosphate (HMBPP) into a mixture of isopentenyl diphosphate (IPP) and dimethylallyl diphosphate (DMAPP). Acts in the terminal step of the DOXP/MEP pathway for isoprenoid precursor biosynthesis. In Rhizobium leguminosarum bv. trifolii (strain WSM2304), this protein is 4-hydroxy-3-methylbut-2-enyl diphosphate reductase.